The sequence spans 295 residues: N-acetylmuramic acid 6-phosphate etherase (295 aa).

Positions 53 to 216 constitute an SIS domain; the sequence is AIQRFNNGGR…STMTMIGVGK (164 aa). E81 (proton donor) is an active-site residue. E112 is a catalytic residue.

It belongs to the GCKR-like family. MurNAc-6-P etherase subfamily. Homodimer.

The catalysed reaction is N-acetyl-D-muramate 6-phosphate + H2O = N-acetyl-D-glucosamine 6-phosphate + (R)-lactate. It participates in amino-sugar metabolism; N-acetylmuramate degradation. In terms of biological role, specifically catalyzes the cleavage of the D-lactyl ether substituent of MurNAc 6-phosphate, producing GlcNAc 6-phosphate and D-lactate. The protein is N-acetylmuramic acid 6-phosphate etherase of Staphylococcus epidermidis (strain ATCC 35984 / DSM 28319 / BCRC 17069 / CCUG 31568 / BM 3577 / RP62A).